The primary structure comprises 363 residues: Serpentine receptor class beta-18 (363 aa).

Transmembrane regions (helical) follow at residues 52–72, 92–112, 135–155, 172–192, 218–238, 276–296, and 303–323; these read LAQF…VVYI, MLLF…YHII, FRYT…CIYI, LILA…IIWV, KATI…IGLF, AALM…YNFL, and TIAT…LVIV.

Belongs to the nematode receptor-like protein srb family.

Its subcellular location is the membrane. This Caenorhabditis elegans protein is Serpentine receptor class beta-18 (srb-18).